A 331-amino-acid chain; its full sequence is GATA transcription factor 12 (331 aa).

Disordered regions lie at residues E30–F49 and S105–A138. Residues V34–S47 show a composition bias toward low complexity. Residues D116–V134 are compositionally biased toward polar residues. The Nuclear localization signal motif lies at K139–R146. Residues S174–E218 are disordered. The segment at G215 to L269 adopts a GATA-type zinc-finger fold.

Belongs to the type IV zinc-finger family. Class A subfamily. In terms of tissue distribution, expressed in the vascular cylinder of roots. Expressed in the differentiation zone of the root stele.

It localises to the nucleus. Its function is as follows. Transcriptional activator that specifically binds 5'-GATA-3' or 5'-GAT-3' motifs within gene promoters. May be involved in the regulation of some light-responsive genes. Transcription activator involved in xylem formation. Functions upstream of NAC030/VND7, a master switch of xylem vessel differentiation. In Arabidopsis thaliana (Mouse-ear cress), this protein is GATA transcription factor 12.